The following is a 667-amino-acid chain: MKMPSFGYEVEKSFLPVDGRKRIVIERIFPSVDCSDFPLKRVIGQTMVVRAYVFADGHERISVHLAYRHIADSQWTEISMEELGNDEWEASFPLEKLGIYEVKIIGWIDHFQNWLEKLHKLAENDKDIAVELSIGIGLLEKNWAFSRSQELKDWIDRLKDERLSLHQRLQLIKNPYLEELVQKNPDRSLSVESESPLFIFVERSKAQFSSWYEFFPRSWSSVPGKHGTFKECERLLPDIAAMGFDVVYLPPIHPIGKKARKGKNNALIASPEDVGSPWAIGSAEGGHKSIHPSLGSLEDFRHFVKKAADYGIEVALDIAFQCSPDHPYLLEHPAWFKWRPDGTVQYAENPPKKYEDIVPFDFETEDWQALWEELKSIFVFWINQGVKIFRVDNPHTKPLAFWRWVIWEIKRDYPDTLFLSEAFTRPKLLYGLAKRGFSQSYTYFTWRSEASEIKAYMEELTSPPVVEFFRPNFWPNTPDILAGYLQYAPPSVFKMRHVLAATLSSNYGIYGPAFELCVNIPLEPGKEEYKDSEKYEIKTWDWNAPGNIKEFIAKVNHIRKLHPALQRTENIRFIQGDNPRLLAYVKELPGHGDPLLIVVNMSRNTEMGWIHFQPESVGLDPSKPYQLTDLLADVTYTWHGEWNFVKLDPEACPAHLFQLSQDGSFSP.

Residues K261, Q321, and D356 each contribute to the alpha-maltose 1-phosphate site. The active-site Nucleophile is D392. N393 lines the alpha-maltose 1-phosphate pocket. E421 serves as the catalytic Proton donor. Position 534 to 535 (534 to 535) interacts with alpha-maltose 1-phosphate; sequence KY.

The protein belongs to the glycosyl hydrolase 13 family. GlgE subfamily. Homodimer.

The catalysed reaction is alpha-maltose 1-phosphate + [(1-&gt;4)-alpha-D-glucosyl](n) = [(1-&gt;4)-alpha-D-glucosyl](n+2) + phosphate. Maltosyltransferase that uses maltose 1-phosphate (M1P) as the sugar donor to elongate linear or branched alpha-(1-&gt;4)-glucans. Is involved in a branched alpha-glucan biosynthetic pathway from trehalose, together with TreS, Mak and GlgB. This is Alpha-1,4-glucan:maltose-1-phosphate maltosyltransferase from Methylacidiphilum infernorum (isolate V4) (Methylokorus infernorum (strain V4)).